A 552-amino-acid polypeptide reads, in one-letter code: Cytochrome P450 97B1, chloroplastic (552 aa).

A chloroplast-targeting transit peptide spans 1 to 52; the sequence is MVAAPISTVKLTDANLHTRFHSSSSSTPSTLSLPLSLHFHFSSHSKRFSSIR. Position 528 (Cys-528) interacts with heme.

Belongs to the cytochrome P450 family. Heme serves as cofactor.

The protein resides in the plastid. Its subcellular location is the chloroplast membrane. This is Cytochrome P450 97B1, chloroplastic (CYP97B1) from Pisum sativum (Garden pea).